Reading from the N-terminus, the 524-residue chain is Probable beta-1,4-xylosyltransferase IRX14 (524 aa).

The Cytoplasmic portion of the chain corresponds to 1–51 (MMKSLLPQSQLRRSAAAASAARSSGGGAGSGGADGAGSDGGAGGRAPATST). The interval 21–41 (ARSSGGGAGSGGADGAGSDGG) is disordered. Residues 24–41 (SGGGAGSGGADGAGSDGG) show a composition bias toward gly residues. The chain crosses the membrane as a helical; Signal-anchor for type II membrane protein span at residues 52 to 71 (FWFLLHALCCLVSLFLGFRF). Residues 72–524 (SRLLFFLLFS…SRSTTKRKEN (453 aa)) are Lumenal-facing. N-linked (GlcNAc...) asparagine glycans are attached at residues N132, N135, N240, and N353. The disordered stretch occupies residues 492–524 (AELVDSKQDQEGRRLSRTDRSSRSRSTTKRKEN). The segment covering 495 to 513 (VDSKQDQEGRRLSRTDRSS) has biased composition (basic and acidic residues).

Belongs to the glycosyltransferase 43 family.

The protein resides in the golgi apparatus membrane. Its function is as follows. Probable beta-1,4-xylosyltransferase involved in xylan biosynthesis in cell walls. The sequence is that of Probable beta-1,4-xylosyltransferase IRX14 from Oryza sativa subsp. japonica (Rice).